Consider the following 439-residue polypeptide: Gap junction gamma-2 protein (439 aa).

Residues 1-25 (MTNMSWSFLTRLLEEIHNHSTFVGK) lie on the Cytoplasmic side of the membrane. A helical membrane pass occupies residues 26-46 (VWLTVLVVFRIVLTAVGGEAI). Topologically, residues 47-78 (YSDEQAKFTCNTRQPGCDNVCYDAFAPLSHVR) are extracellular. Residues 79 to 99 (FWVFQIVVISTPSVMYLGYAV) form a helical membrane-spanning segment. At 100–216 (HRLARASEQE…EGLMRVYVAQ (117 aa)) the chain is on the cytoplasmic side. The segment at 108-178 (QERRRALRRR…AEEAGAEEAC (71 aa)) is disordered. Over residues 112–125 (RALRRRPGPRRAPR) the composition is skewed to basic residues. Residues 140–174 (DLGEEEPMLGLGEEEEEEETGAAEGAGEEAEEAGA) are compositionally biased toward acidic residues. A helical transmembrane segment spans residues 217–237 (LVARAAFEVAFLVGQYLLYGF). Over 238–265 (EVRPFFPCSRQPCPHVVDCFVSRPTEKT) the chain is Extracellular. Residues 266–286 (VFLLVMYVVSCLCLLLNLCEM) form a helical membrane-spanning segment. Residues 287 to 439 (AHLGLGSAQD…SRDGKTTVWI (153 aa)) lie on the Cytoplasmic side of the membrane. Positions 364–439 (AGDRDRDSSP…SRDGKTTVWI (76 aa)) are disordered. Serine 371 bears the Phosphoserine mark. The segment covering 378–393 (PAASRGPPRAGAPASR) has biased composition (low complexity).

It belongs to the connexin family. Gamma-type subfamily. In terms of assembly, a connexon is composed of a hexamer of connexins. Interacts with TJP1. Expressed in central nervous system, in sciatic nerve and sural nerve. Also detected in skeletal muscles.

It localises to the cell membrane. The protein resides in the cell junction. The protein localises to the gap junction. Functionally, one gap junction consists of a cluster of closely packed pairs of transmembrane channels, the connexons, through which materials of low MW diffuse from one cell to a neighboring cell. May play a role in myelination in central and peripheral nervous systems. The sequence is that of Gap junction gamma-2 protein (GJC2) from Homo sapiens (Human).